Consider the following 227-residue polypeptide: Protein FAM3C (227 aa).

The first 30 residues, 1 to 30, serve as a signal peptide directing secretion; that stretch reads MMRAGGLLKLGVLVSVLFVAVFLAFELLES. 2 disulfide bridges follow: Cys58-Cys86 and Cys64-Cys221. Positions 67–225 constitute a GG-type lectin domain; the sequence is DHFAFKITSG…LEMEGCIPIK (159 aa).

The protein belongs to the FAM3 family.

It is found in the secreted. Involved in retinal laminar formation. The protein is Protein FAM3C (fam3c) of Danio rerio (Zebrafish).